Here is a 481-residue protein sequence, read N- to C-terminus: Anti-sigma-I factor RsgI5 (481 aa).

Topologically, residues 1-50 are cytoplasmic; it reads MKHKGIVLKLTKSKAIISTNDFQCYYIKRSPTIYVGKEVEFTNKDIVTKK. A RsgI N-terminal anti-sigma domain is found at 3 to 50; the sequence is HKGIVLKLTKSKAIISTNDFQCYYIKRSPTIYVGKEVEFTNKDIVTKK. Residues 51–71 traverse the membrane as a helical segment; the sequence is SVLIKPALSVACFILLIACVL. The Extracellular segment spans residues 72–481; that stretch reads SLSKIINNIS…DATFIGIKVD (410 aa). A disordered region spans residues 255–339; the sequence is ASEERNPEES…TPTPTPTPAD (85 aa). Residues 256-265 show a composition bias toward basic and acidic residues; that stretch reads SEERNPEESP. Composition is skewed to low complexity over residues 266 to 283 and 291 to 315; these read KMTP…TPTD and NTPT…TSTP. Over residues 316–336 the composition is skewed to pro residues; sequence APKPTSTPTPTLMPTPTPTPT.

As to quaternary structure, interacts (via RsgI N-terminal anti-sigma domain) with SigI5.

Its subcellular location is the cell membrane. Functionally, anti-sigma factor for SigI5. Negatively regulates SigI5 activity through direct interaction. Binding of the polysaccharide substrate to the extracellular C-terminal sensing domain of RsgI5 may induce a conformational change in its N-terminal cytoplasmic region, leading to the release and activation of SigI5. This is Anti-sigma-I factor RsgI5 from Acetivibrio thermocellus (strain ATCC 27405 / DSM 1237 / JCM 9322 / NBRC 103400 / NCIMB 10682 / NRRL B-4536 / VPI 7372) (Clostridium thermocellum).